Here is a 310-residue protein sequence, read N- to C-terminus: MGKRMSLILGAFLSVFLLVACSSTGTKTAKSDKLKVVATNSIIADMTKAIAGDKIDLHSIVPIGQDPHEYEPLPEDVEKTSNADVIFYNGINLEDGGQAWFTKLVKNAQKTKNKDYFAVSDGIDVIYLEGASEKGKEDPHAWLNLENGIIYSKNIAKQLIAKDPKNKETYEKNLKAYVAKLEKLDKEAKSKFDAIAENKKLIVTSEGCFKYFSKAYGVPSAYIWEINTEEEGTPDQISSLIEKLKVIKPSALFVESSVDRRPMETVSKDSGIPIYSEIFTDSIAKKGKPGDSYYAMMKWNLDKISEGLAK.

Positions 1 to 20 (MGKRMSLILGAFLSVFLLVA) are cleaved as a signal peptide. The N-palmitoyl cysteine moiety is linked to residue Cys21. A lipid anchor (S-diacylglycerol cysteine) is attached at Cys21. The Fe(2+) site is built by His68, His140, Glu206, and Asp281.

It belongs to the bacterial solute-binding protein 9 family. Lipoprotein receptor antigen (Lrai) subfamily.

The protein localises to the cell membrane. In terms of biological role, part of the ATP-binding cassette (ABC) transport system MtsABC involved in iron import. Binds iron with high affinity and specificity and delivers it to the membrane permease for translocation into the cytoplasm. Has low affinity for Zn(2+) and Cu(2+). The polypeptide is Iron ABC transporter substrate-binding lipoprotein MtsA (mtsA) (Streptococcus pyogenes serotype M1).